The primary structure comprises 155 residues: Snaclec agkicetin-C subunit alpha (155 aa).

The signal sequence occupies residues 1–23 (MGRFIFVSFGLLVVFLSLSGTAA). 3 cysteine pairs are disulfide-bonded: C25–C36, C53–C149, and C124–C141. Residues 32–150 (YIRFCYQPFK…CGLKHVFMCK (119 aa)) enclose the C-type lectin domain.

Belongs to the snaclec family. Heterodimer of subunits alpha and beta; disulfide-linked. Expressed by the venom gland.

It is found in the secreted. Its function is as follows. Is a potent glycoprotein Ibalpha (GP1BA) antagonist. Concentration-dependently inhibits botrocetin-, ristocetin- and low dose thrombin-induced platelet aggregation. Inhibits platelet adhesion only through inhibiting the vWF interaction with GP1BA, but has minimal effect on other platelet receptors, such as alpha-IIb/beta-3 (ITGA2B/ITGB3) or alpha-2/beta-1 (ITGA2/ITGB1). Causes an instant severe thrombocytopenia in rats and is not lethal to mice. This chain is Snaclec agkicetin-C subunit alpha, found in Deinagkistrodon acutus (Hundred-pace snake).